Here is an 83-residue protein sequence, read N- to C-terminus: MPEEEQLTFEAALQKLEEVVQALEGEGLTLEDSLAYYQEGIRLVRLCRQRLKEVEGKLQVILLQDGEVVTRELSLPGGENHGT.

Belongs to the XseB family. As to quaternary structure, heterooligomer composed of large and small subunits.

It is found in the cytoplasm. It catalyses the reaction Exonucleolytic cleavage in either 5'- to 3'- or 3'- to 5'-direction to yield nucleoside 5'-phosphates.. Bidirectionally degrades single-stranded DNA into large acid-insoluble oligonucleotides, which are then degraded further into small acid-soluble oligonucleotides. The polypeptide is Exodeoxyribonuclease 7 small subunit (Moorella thermoacetica (strain ATCC 39073 / JCM 9320)).